A 269-amino-acid polypeptide reads, in one-letter code: Formamidopyrimidine-DNA glycosylase (269 aa).

The active-site Schiff-base intermediate with DNA is the proline 2. Residue glutamate 3 is the Proton donor of the active site. Lysine 57 acts as the Proton donor; for beta-elimination activity in catalysis. Positions 90, 109, and 150 each coordinate DNA. The FPG-type zinc-finger motif lies at 235-269 (QVYGRKGEPCRVCGTPIVATKHAQRATFYCRHCQK). Catalysis depends on arginine 259, which acts as the Proton donor; for delta-elimination activity.

This sequence belongs to the FPG family. In terms of assembly, monomer. Zn(2+) serves as cofactor.

It catalyses the reaction Hydrolysis of DNA containing ring-opened 7-methylguanine residues, releasing 2,6-diamino-4-hydroxy-5-(N-methyl)formamidopyrimidine.. It carries out the reaction 2'-deoxyribonucleotide-(2'-deoxyribose 5'-phosphate)-2'-deoxyribonucleotide-DNA = a 3'-end 2'-deoxyribonucleotide-(2,3-dehydro-2,3-deoxyribose 5'-phosphate)-DNA + a 5'-end 5'-phospho-2'-deoxyribonucleoside-DNA + H(+). In terms of biological role, involved in base excision repair of DNA damaged by oxidation or by mutagenic agents. Acts as a DNA glycosylase that recognizes and removes damaged bases. Has a preference for oxidized purines, such as 7,8-dihydro-8-oxoguanine (8-oxoG). Has AP (apurinic/apyrimidinic) lyase activity and introduces nicks in the DNA strand. Cleaves the DNA backbone by beta-delta elimination to generate a single-strand break at the site of the removed base with both 3'- and 5'-phosphates. The protein is Formamidopyrimidine-DNA glycosylase of Salmonella paratyphi C (strain RKS4594).